Reading from the N-terminus, the 148-residue chain is SsrA-binding protein (148 aa).

The protein belongs to the SmpB family.

It is found in the cytoplasm. Its function is as follows. Required for rescue of stalled ribosomes mediated by trans-translation. Binds to transfer-messenger RNA (tmRNA), required for stable association of tmRNA with ribosomes. tmRNA and SmpB together mimic tRNA shape, replacing the anticodon stem-loop with SmpB. tmRNA is encoded by the ssrA gene; the 2 termini fold to resemble tRNA(Ala) and it encodes a 'tag peptide', a short internal open reading frame. During trans-translation Ala-aminoacylated tmRNA acts like a tRNA, entering the A-site of stalled ribosomes, displacing the stalled mRNA. The ribosome then switches to translate the ORF on the tmRNA; the nascent peptide is terminated with the 'tag peptide' encoded by the tmRNA and targeted for degradation. The ribosome is freed to recommence translation, which seems to be the essential function of trans-translation. The polypeptide is SsrA-binding protein (Azoarcus sp. (strain BH72)).